We begin with the raw amino-acid sequence, 556 residues long: mRNA-capping enzyme subunit beta (556 aa).

Disordered stretches follow at residues 1 to 28 (MKPS…DNNV) and 56 to 217 (LPPV…QKTS). A compositionally biased stretch (polar residues) spans 63–74 (VSTSDTGNTSHT). Residues 85 to 96 (ESDETDTDDEPG) are compositionally biased toward acidic residues. 2 stretches are compositionally biased toward basic and acidic residues: residues 103–131 (TKFR…KDKQ) and 139–212 (IQLD…KDIF).

Belongs to the fungal TPase family. Heterodimer. The mRNA-capping enzyme is composed of two separate chains alpha and beta, respectively a mRNA guanylyltransferase and an mRNA 5'-triphosphate monophosphatase. Mg(2+) is required as a cofactor.

The protein resides in the nucleus. It carries out the reaction a 5'-end triphospho-ribonucleoside in mRNA + H2O = a 5'-end diphospho-ribonucleoside in mRNA + phosphate + H(+). In terms of biological role, first step of mRNA capping. Converts the 5'-triphosphate end of a nascent mRNA chain into a diphosphate end. The chain is mRNA-capping enzyme subunit beta (CET1) from Kluyveromyces lactis (strain ATCC 8585 / CBS 2359 / DSM 70799 / NBRC 1267 / NRRL Y-1140 / WM37) (Yeast).